A 441-amino-acid polypeptide reads, in one-letter code: Probable membrane metalloprotease ARASP2, chloroplastic (441 aa).

The transit peptide at 1-84 directs the protein to the chloroplast; the sequence is MLLNISSSPI…DFGSLESVLE (84 aa). Zn(2+) is bound at residue His96. Residue Glu97 is part of the active site. Zn(2+) is bound at residue His100. Residues 171 to 191 traverse the membrane as a helical segment; the sequence is VIVVSAGIVANVIFAYAIIFT. In terms of domain architecture, PDZ spans 196–249; it reads VGLPVQESFPGVLVPDVKSFSAASRDGLLPGDVILAVDGTELSNSGSDSVSKVV. The next 2 helical transmembrane spans lie at 373–393 and 407–427; these read LAVINLLPLPALDGGTLALIL and VEQGIMSSGIMLVLFLGLFLI.

Belongs to the peptidase M50A family. Zn(2+) serves as cofactor.

The protein localises to the plastid. It is found in the chloroplast inner membrane. Functionally, metalloprotease essential for chloroplast and plant development. May be involved in regulated intramembrane proteolysis (RIP). The sequence is that of Probable membrane metalloprotease ARASP2, chloroplastic from Arabidopsis thaliana (Mouse-ear cress).